The chain runs to 177 residues: Putative adenylate kinase (177 aa).

Positions 10, 12, 13, 14, and 15 each coordinate ATP. An NMP region spans residues 30-53 (DITEAVKKYKLYTEKDEDMDSYVI). An LID region spans residues 103 to 113 (KRGYKPKKVLE). ATP is bound at residue Arg-104.

It belongs to the adenylate kinase family. AK6 subfamily. As to quaternary structure, interacts with uS11. Not a structural component of 40S pre-ribosomes, but transiently interacts with them by binding to uS11.

The enzyme catalyses AMP + ATP = 2 ADP. The catalysed reaction is ATP + H2O = ADP + phosphate + H(+). Its function is as follows. Broad-specificity nucleoside monophosphate (NMP) kinase that catalyzes the reversible transfer of the terminal phosphate group between nucleoside triphosphates and monophosphates. Also has ATPase activity. Involved in the late maturation steps of the 30S ribosomal particles, specifically 16S rRNA maturation. While NMP activity is not required for ribosome maturation, ATPase activity is. Associates transiently with small ribosomal subunit protein uS11. ATP hydrolysis breaks the interaction with uS11. May temporarily remove uS11 from the ribosome to enable a conformational change of the ribosomal RNA that is needed for the final maturation step of the small ribosomal subunit. This chain is Putative adenylate kinase, found in Methanocaldococcus jannaschii (strain ATCC 43067 / DSM 2661 / JAL-1 / JCM 10045 / NBRC 100440) (Methanococcus jannaschii).